Consider the following 1530-residue polypeptide: Multidrug resistance-associated protein 1 (1530 aa).

Topologically, residues 1–33 (MALRDFCSVDGSDLFWEWNVTWNTSNPDFTKCF) are extracellular. An N-linked (GlcNAc...) asparagine glycan is attached at Asn19. Residues 34-54 (QNTVLVWVPCSYLWVCFPFYF) traverse the membrane as a helical segment. Residues 55 to 74 (LYLSHHDRGYIQMTHLNKAK) lie on the Cytoplasmic side of the membrane. A helical transmembrane segment spans residues 75-95 (TALGFLLWIVCWADLFYSFWE). The Extracellular segment spans residues 96-100 (RSMGK). The chain crosses the membrane as a helical span at residues 101 to 121 (LLAPVFLVSPTLLGITMLLAT). Topologically, residues 122 to 133 (FLIQIERRRGVQ) are cytoplasmic. A helical membrane pass occupies residues 134–154 (SSGIMLTFWLIALLCALAILR). Residues 155-172 (SKIMTALKEDARVDVFRD) lie on the Extracellular side of the membrane. Residues 173 to 193 (VTFYIYFSLVLIQLVLSCFSD) form a helical membrane-spanning segment. The Cytoplasmic portion of the chain corresponds to 194 to 316 (RSPLFSETIN…KERDPSLFKV (123 aa)). The residue at position 277 (Tyr277) is a Phosphotyrosine. Ser289 bears the Phosphoserine mark. The helical transmembrane segment at 317-337 (LYKTFGPYFLMSFLFKAVHDL) threads the bilayer. An ABC transmembrane type-1 1 domain is found at 325 to 608 (FLMSFLFKAV…LPMVISSIVQ (284 aa)). At 338 to 363 (MMFAGPEILKLLINFVNDKKAPEWQG) the chain is on the extracellular side. Residues 364–384 (YFYTALLFISACLQTLVLHQY) traverse the membrane as a helical segment. At 385-440 (FHICFVSGMRIKTAVIGAVYRKALVITNAARKSSTVGEIVNLMSVDAQRFMDLATY) the chain is on the cytoplasmic side. A helical transmembrane segment spans residues 441–461 (INMIWSAPLQVILALYLLWLN). The Extracellular segment spans residues 462–464 (LGP). A helical transmembrane segment spans residues 465–485 (SVLAGVAVMVLMVPLNAVMAM). Residues 486–547 (KTKTYQVAHM…VLKKSAYLAA (62 aa)) are Cytoplasmic-facing. Lys503 is modified (N6-succinyllysine). Residues 548–568 (VGTFTWVCTPFLVALSTFAVY) form a helical membrane-spanning segment. Topologically, residues 569-590 (VTVDENNILDAQKAFVSLALFN) are extracellular. A helical membrane pass occupies residues 591 to 611 (ILRFPLNILPMVISSIVQASV). Residues 612 to 966 (SLKRLRVFLS…VKLSVYWDYM (355 aa)) are Cytoplasmic-facing. The 225-residue stretch at 644-868 (ITVKNATFTW…DGAFAEFLRT (225 aa)) folds into the ABC transporter 1 domain. An ATP-binding site is contributed by 678–685 (GQVGCGKS). The disordered stretch occupies residues 912-939 (RQLSSSSSYSRDVSQHHTSTAELRKPGP). Ser915 and Ser930 each carry phosphoserine. The helical transmembrane segment at 967 to 987 (KAIGLFISFLSIFLFLCNHVA) threads the bilayer. Positions 974–1255 (SFLSIFLFLC…LVRMSSEMET (282 aa)) constitute an ABC transmembrane type-1 2 domain. The Extracellular portion of the chain corresponds to 988-1024 (SLVSNYWLSLWTDDPIVNGTQEHTQVRLSVYGALGIS). The N-linked (GlcNAc...) asparagine glycan is linked to Asn1005. A helical transmembrane segment spans residues 1025-1045 (QGITVFGYSMAVSIGGIFASR). Residues 1046-1088 (RLHLDLLHNVLRSPISFFERTPSGNLVNRFSKELDTVDSMIPQ) lie on the Cytoplasmic side of the membrane. A helical membrane pass occupies residues 1089-1109 (VIKMFMGSLFNVIGACIIILL). A topological domain (extracellular) is located at residue Ala1110. Residues 1111 to 1131 (TPMAAVIIPPLGLIYFFVQRF) traverse the membrane as a helical segment. Topologically, residues 1132-1202 (YVASSRQLKR…VANRWLAVRL (71 aa)) are cytoplasmic. A helical membrane pass occupies residues 1203–1223 (ECVGNCIVLFASLFAVISRHS). The Extracellular portion of the chain corresponds to 1224-1225 (LS). Residues 1226–1246 (AGLVGLSVSYSLQVTTYLNWL) traverse the membrane as a helical segment. At 1247–1530 (VRMSSEMETN…YSMAKDSGLV (284 aa)) the chain is on the cytoplasmic side. Residues 1292–1526 (VEFRDYGLRY…RGLFYSMAKD (235 aa)) enclose the ABC transporter 2 domain. 1326 to 1333 (GRTGAGKS) provides a ligand contact to ATP.

The protein belongs to the ABC transporter superfamily. ABCC family. Conjugate transporter (TC 3.A.1.208) subfamily. Expressed in heart, spleen, lung, kidney, skeletal muscle, mammary gland and weaker in brain and liver.

It localises to the cell membrane. The protein resides in the basolateral cell membrane. It carries out the reaction ATP + H2O + xenobioticSide 1 = ADP + phosphate + xenobioticSide 2.. The enzyme catalyses an S-substituted glutathione(in) + ATP + H2O = an S-substituted glutathione(out) + ADP + phosphate + H(+). The catalysed reaction is sphing-4-enine 1-phosphate(in) + ATP + H2O = sphing-4-enine 1-phosphate(out) + ADP + phosphate + H(+). It catalyses the reaction leukotriene C4(in) + ATP + H2O = leukotriene C4(out) + ADP + phosphate + H(+). It carries out the reaction 17beta-estradiol 17-O-(beta-D-glucuronate)(in) + ATP + H2O = 17beta-estradiol 17-O-(beta-D-glucuronate)(out) + ADP + phosphate + H(+). The enzyme catalyses daunorubicin(in) + ATP + H2O = daunorubicin(out) + ADP + phosphate + H(+). The catalysed reaction is vincristine(in) + ATP + H2O = vincristine(out) + ADP + phosphate + H(+). It catalyses the reaction 2',3'-cGAMP(in) + ATP + H2O = 2',3'-cGAMP(out) + ADP + phosphate + H(+). It carries out the reaction S-[(2E,6E,10E)-geranylgeranyl]-L-glutathione(in) + ATP + H2O = S-[(2E,6E,10E)-geranylgeranyl]-L-glutathione(out) + ADP + phosphate + H(+). The enzyme catalyses prostaglandin A2-S-(R)-glutathione(in) + ATP + H2O = prostaglandin A2-S-(R)-glutathione(out) + ADP + phosphate + H(+). The catalysed reaction is prostaglandin A2-S-(S)-glutathione(in) + ATP + H2O = prostaglandin A2-S-(S)-glutathione(out) + ADP + phosphate + H(+). MK 571 inhibits sphingosine 1-phosphate and leukotriene C4 export. Functionally, mediates export of organic anions and drugs from the cytoplasm. Mediates ATP-dependent transport of glutathione and glutathione conjugates, leukotriene C4, estradiol-17-beta-o-glucuronide, methotrexate, antiviral drugs and other xenobiotics. Confers resistance to anticancer drugs by decreasing accumulation of drug in cells, and by mediating ATP- and GSH-dependent drug export. Hydrolyzes ATP with low efficiency. Catalyzes the export of sphingosine 1-phosphate from mast cells independently of their degranulation. Participates in inflammatory response by allowing export of leukotriene C4 from leukotriene C4-synthesizing cells. Mediates ATP-dependent, GSH-independent cyclic GMP-AMP (cGAMP) export. Thus, by limiting intracellular cGAMP concentrations negatively regulates the cGAS-STING pathway. Exports S-geranylgeranyl-glutathione (GGG) in lymphoid cells and stromal compartments of lymphoid organs. ABCC1 (via extracellular transport) with GGT5 (via GGG catabolism) establish GGG gradients within lymphoid tissues to position P2RY8-positive lymphocytes at germinal centers in lymphoid follicles and restrict their chemotactic transmigration from blood vessels to the bone marrow parenchyma. Mediates basolateral export of GSH-conjugated R- and S-prostaglandin A2 diastereomers in polarized epithelial cells. In Bos taurus (Bovine), this protein is Multidrug resistance-associated protein 1.